Here is a 407-residue protein sequence, read N- to C-terminus: Transmembrane protein 184B (407 aa).

Positions 1–24 (MTVRGAALAPDPASPTTAAASPSI) are disordered. A run of 7 helical transmembrane segments spans residues 40–60 (FLMT…ALLI), 84–104 (ILFI…FFTN), 121–141 (LVIY…SSIM), 178–198 (LQFC…QAFG), 214–234 (VTII…LFYF), 249–269 (FFMV…LAIL), and 290–310 (VAAG…ALAL). The disordered stretch occupies residues 369–395 (TLEPGPTWRGGAHGLSRSHSLSGARDN). Phosphoserine occurs at positions 388, 402, and 403.

This sequence belongs to the TMEM184 family.

It localises to the membrane. Its function is as follows. May activate the MAP kinase signaling pathway. The sequence is that of Transmembrane protein 184B (TMEM184B) from Bos taurus (Bovine).